We begin with the raw amino-acid sequence, 127 residues long: CST complex subunit TEN1 (127 aa).

This sequence belongs to the TEN1 family. As to quaternary structure, component of the CST complex, composed of CTC1, TEN1 and STN1. Interacts with STN1. No interaction with POT1A, but competes with it for STN1 binding. As to expression, ubiquitous. High expression in meristematic tissues and in vasculature.

The protein resides in the nucleus. The protein localises to the chromosome. Its subcellular location is the telomere. In terms of biological role, required for the maintenance of meristems and stem cells through the reduction of DNA damage. Promotes telomere integrity by maintaining telomere length and proper architecture of the chromosome terminus. Negatively regulates telomerase repeat addition processivity. Hampers contacts between enzymatically active telomerase and CST complex. This Arabidopsis thaliana (Mouse-ear cress) protein is CST complex subunit TEN1.